We begin with the raw amino-acid sequence, 217 residues long: tRNA (guanine-N(7)-)-methyltransferase (217 aa).

Glu56, Glu81, Asp108, and Asp130 together coordinate S-adenosyl-L-methionine. Asp130 is an active-site residue. Lys134 and Asp166 together coordinate substrate.

It belongs to the class I-like SAM-binding methyltransferase superfamily. TrmB family.

It catalyses the reaction guanosine(46) in tRNA + S-adenosyl-L-methionine = N(7)-methylguanosine(46) in tRNA + S-adenosyl-L-homocysteine. It participates in tRNA modification; N(7)-methylguanine-tRNA biosynthesis. Catalyzes the formation of N(7)-methylguanine at position 46 (m7G46) in tRNA. The protein is tRNA (guanine-N(7)-)-methyltransferase of Neorickettsia sennetsu (strain ATCC VR-367 / Miyayama) (Ehrlichia sennetsu).